Reading from the N-terminus, the 232-residue chain is Acyl-protein thioesterase 1 (232 aa).

Residues serine 125, aspartate 179, and histidine 212 each act as charge relay system in the active site.

Belongs to the AB hydrolase superfamily. AB hydrolase 2 family.

It is found in the cytoplasm. The protein resides in the nucleus. The catalysed reaction is S-hexadecanoyl-L-cysteinyl-[protein] + H2O = L-cysteinyl-[protein] + hexadecanoate + H(+). Functionally, hydrolyzes fatty acids from S-acylated cysteine residues in proteins with a strong preference for palmitoylated G-alpha proteins over other acyl substrates. Mediates the deacylation of G-alpha proteins such as GPA1 in vivo, but has weak or no activity toward palmitoylated Ras proteins. Has weak lysophospholipase activity in vitro; however such activity may not exist in vivo. In Debaryomyces hansenii (strain ATCC 36239 / CBS 767 / BCRC 21394 / JCM 1990 / NBRC 0083 / IGC 2968) (Yeast), this protein is Acyl-protein thioesterase 1.